The primary structure comprises 396 residues: Purine ribonucleoside efflux pump NepI (396 aa).

Over 1–21 (MSEFIAENRGADAITRPNWSA) the chain is Cytoplasmic. A helical membrane pass occupies residues 22 to 42 (VFSVAFCVACLIIVEFLPVSL). Topologically, residues 43–54 (LTPMAQDLGISE) are periplasmic. The helical transmembrane segment at 55–75 (GVAGQSVTVTAFVAMFASLFI) threads the bilayer. Over 76–85 (TQTIQATDRR) the chain is Cytoplasmic. A helical transmembrane segment spans residues 86–106 (YVVILFAVLLTLSCLLVSFAN). A topological domain (periplasmic) is located at residue Ser107. Residues 108–128 (FSLLLIGRACLGLALGGFWAI) form a helical membrane-spanning segment. Residues 129–147 (SASLTMRLVPPRTVPKALS) lie on the Cytoplasmic side of the membrane. The chain crosses the membrane as a helical span at residues 148-168 (VIFGAVSIALVIAAPLGGFLG). At 169–175 (ELIGWRN) the chain is on the periplasmic side. Residues 176–196 (VFNAAAAMGVLCIFWIIKSLP) traverse the membrane as a helical segment. Topologically, residues 197–215 (SLPGEPSHQKQNTFRLLQR) are cytoplasmic. A helical membrane pass occupies residues 216-236 (PGVMAGMIAIFMSFAGQFAFF). The Periplasmic portion of the chain corresponds to 237-255 (TYIRPVYMNLAGFGVDGLT). The chain crosses the membrane as a helical span at residues 256–276 (LVLLSFGIASFVGTSLSSFIL). Residues 277 to 281 (KRSVK) are Cytoplasmic-facing. The chain crosses the membrane as a helical span at residues 282–302 (LALAGAPFVLALSALVLTLWG). Over 303-305 (SDK) the chain is Periplasmic. Residues 306-326 (IVATGVAIIWGLTFALIPVGW) form a helical membrane-spanning segment. Residues 327 to 343 (STWITRSLADQAEKAGS) are Cytoplasmic-facing. The chain crosses the membrane as a helical span at residues 344–364 (IQVAVIQLANTCGAAIGGYAL). At 365-366 (DN) the chain is on the periplasmic side. A helical membrane pass occupies residues 367-387 (IGLTSPLMLSGTLMLLTALLV). Residues 388-396 (TAKVKMKKS) are Cytoplasmic-facing.

It belongs to the major facilitator superfamily. DHA1 family. NepI (TC 2.A.1.2.26) subfamily.

The protein resides in the cell inner membrane. The catalysed reaction is inosine(in) + H(+)(out) = inosine(out) + H(+)(in). The enzyme catalyses guanosine(in) + H(+)(out) = guanosine(out) + H(+)(in). Involved in the efflux of purine ribonucleosides, such as inosine and guanosine. In Escherichia coli O127:H6 (strain E2348/69 / EPEC), this protein is Purine ribonucleoside efflux pump NepI.